The chain runs to 383 residues: GTP-binding protein 10 homolog (383 aa).

Positions 22–157 (PTFLDTLRLA…RTVNLDLKLI (136 aa)) constitute an Obg domain. The OBG-type G domain occupies 158–353 (ADVGLVGFPN…VKSQLRRTLV (196 aa)). GTP contacts are provided by residues 164-171 (GFPNAGKS), 211-215 (DLPGL), and 287-290 (NKMD).

This sequence belongs to the TRAFAC class OBG-HflX-like GTPase superfamily. OBG GTPase family.

The protein resides in the nucleus. Its subcellular location is the nucleolus. Its function is as follows. May be involved in the ribosome maturation process. The polypeptide is GTP-binding protein 10 homolog (Drosophila melanogaster (Fruit fly)).